The chain runs to 118 residues: Basic phospholipase A2 4 (118 aa).

Intrachain disulfides connect C11–C71, C27–C117, C29–C45, C44–C98, C51–C91, C60–C84, and C78–C89. Positions 28, 30, and 32 each coordinate Ca(2+). H48 is an active-site residue. D49 is a Ca(2+) binding site. D92 is a catalytic residue.

Belongs to the phospholipase A2 family. Group I subfamily. D49 sub-subfamily. In terms of assembly, monomer. Ca(2+) is required as a cofactor. Expressed by the venom gland.

Its subcellular location is the secreted. The catalysed reaction is a 1,2-diacyl-sn-glycero-3-phosphocholine + H2O = a 1-acyl-sn-glycero-3-phosphocholine + a fatty acid + H(+). In terms of biological role, PLA2 catalyzes the calcium-dependent hydrolysis of the 2-acyl groups in 3-sn-phosphoglycerides. This chain is Basic phospholipase A2 4, found in Laticauda semifasciata (Black-banded sea krait).